The following is a 268-amino-acid chain: Fibroblast growth factor 8 (268 aa).

The signal sequence occupies residues 1–22; that stretch reads MGSPRSALSCLLLHLLVLCLQA. Gln23 is modified (pyrrolidone carboxylic acid). The interval 29–87 is disordered; the sequence is QKRGPGAGNPADTLGQGHEDRPFGQRSRAGKNFTNPAPNYPEEGSKEQRDSVLPKVTQR. Residue Asn60 is glycosylated (N-linked (GlcNAc...) asparagine). A compositionally biased stretch (basic and acidic residues) spans 71–80; it reads EGSKEQRDSV. Asn190 is a glycosylation site (N-linked (GlcNAc...) asparagine).

Belongs to the heparin-binding growth factors family. In terms of assembly, monomer. Homodimer. Interacts with FGFR1, FGFR2, FGFR3 and FGFR4. Affinity between fibroblast growth factors (FGFs) and their receptors is increased by heparan sulfate glycosaminoglycans that function as coreceptors. Post-translationally, the N-terminus is blocked. As to expression, absent in normal mammary glands and detected only in adult testis and ovary and in midgestational embryos.

Its subcellular location is the secreted. Its function is as follows. Plays an important role in the regulation of embryonic development, cell proliferation, cell differentiation and cell migration. Required for normal brain, eye, ear and limb development during embryogenesis. Required for normal development of the gonadotropin-releasing hormone (GnRH) neuronal system. Plays a role in neurite outgrowth in hippocampal cells. Cooperates with Wnt-1 in mouse mammary tumor virus-induced murine mammary tumorigenesis. In Mus musculus (Mouse), this protein is Fibroblast growth factor 8 (Fgf8).